The sequence spans 573 residues: 60 kDa heat shock protein, mitochondrial (573 aa).

The N-terminal 26 residues, 1–26 (MLRLPAVLRQIRPVSRALAPHLTRAY), are a transit peptide targeting the mitochondrion. ATP contacts are provided by residues Lys75 and 111–115 (DGTTT). Tyr227 is modified (phosphotyrosine). Gly440 and Asp520 together coordinate ATP.

Its subcellular location is the mitochondrion matrix. The catalysed reaction is ATP + H2O + a folded polypeptide = ADP + phosphate + an unfolded polypeptide.. Functionally, chaperonin implicated in mitochondrial protein import and macromolecular assembly. Together with Hsp10, facilitates the correct folding of imported proteins. May also prevent misfolding and promote the refolding and proper assembly of unfolded polypeptides generated under stress conditions in the mitochondrial matrix. The functional units of these chaperonins consist of heptameric rings of the large subunit Hsp60, which function as a back-to-back double ring. In a cyclic reaction, Hsp60 ring complexes bind one unfolded substrate protein per ring, followed by the binding of ATP and association with 2 heptameric rings of the co-chaperonin Hsp10. This leads to sequestration of the substrate protein in the inner cavity of Hsp60 where, for a certain period of time, it can fold undisturbed by other cell components. Synchronous hydrolysis of ATP in all Hsp60 subunits results in the dissociation of the chaperonin rings and the release of ADP and the folded substrate protein. This Gallus gallus (Chicken) protein is 60 kDa heat shock protein, mitochondrial.